A 566-amino-acid chain; its full sequence is Sister chromatid cohesion protein 1 (566 aa).

Ser-161 is modified (phosphoserine). Ser-175 carries the post-translational modification Phosphoserine; by CDC5. At Lys-210 the chain carries N6-acetyllysine; by ECO1. Phosphoserine; by CDC5 is present on Ser-263. Ser-307 is modified (phosphoserine). A disordered region spans residues 325-356 (SIQIDEETENSESIASSNTYKEERSNNLLTPQ). A Phosphothreonine modification is found at Thr-354.

It belongs to the rad21 family. Interacts directly with IRR1/SCC3 in cohesin complex. Cohesin complexes are composed of the SMC1 and SMC3 heterodimer attached via their hinge domain, MCD1/SCC1 which link them, and IRR1, which interacts with MCD1. The cohesin complex also interacts with SCC2, which is required for its association with chromosomes. Post-translationally, cleaved by ESP1 at the onset of anaphase. Phosphorylated by CDC5/Polo-like kinase at the onset of anaphase. Phosphorylation takes places at proximity to cleavage sites and is required for an efficient cleavage by ESP1. In terms of processing, acetylated by ECO1.

It is found in the nucleus. It localises to the chromosome. The protein resides in the centromere. Functionally, cleavable component of the cohesin complex involved in chromosome cohesion during cell cycle. The cohesin complex is required for the cohesion of sister chromatids after DNA replication. The cohesin complex apparently forms a large proteinaceous ring within which sister chromatids can be trapped. At metaphase-anaphase transition, this protein is cleaved by ESP1 and dissociates from chromatin, allowing sister chromatids to segregate. This is Sister chromatid cohesion protein 1 (MCD1) from Saccharomyces cerevisiae (strain ATCC 204508 / S288c) (Baker's yeast).